Consider the following 349-residue polypeptide: tRNA pseudouridine synthase D (349 aa).

Phenylalanine 27 is a binding site for substrate. Aspartate 80 functions as the Nucleophile in the catalytic mechanism. Asparagine 129 provides a ligand contact to substrate. The TRUD domain maps to 155-303; the sequence is GVPNYFGAQR…VEAARRAMLL (149 aa). Residue phenylalanine 329 participates in substrate binding.

The protein belongs to the pseudouridine synthase TruD family.

It catalyses the reaction uridine(13) in tRNA = pseudouridine(13) in tRNA. In terms of biological role, responsible for synthesis of pseudouridine from uracil-13 in transfer RNAs. This chain is tRNA pseudouridine synthase D, found in Escherichia coli O127:H6 (strain E2348/69 / EPEC).